We begin with the raw amino-acid sequence, 101 residues long: Growth-regulated alpha protein (101 aa).

The signal sequence occupies residues 1–28 (MAPATRSLLRAPLLLLLLLLATSRLATG). Intrachain disulfides connect Cys-37-Cys-63 and Cys-39-Cys-79.

Belongs to the intercrine alpha (chemokine CxC) family.

It is found in the secreted. Has chemotactic activity for neutrophils. This Cricetulus griseus (Chinese hamster) protein is Growth-regulated alpha protein (CXCL1).